A 585-amino-acid chain; its full sequence is Sodium/calcium exchanger NCL (585 aa).

The next 5 helical transmembrane spans lie at 83–103 (VFLILVYGFLMFTAATYLSAG), 106–126 (LLLEILGPGIVGGLFLPMLGA), 149–169 (VSVGMGLLAGSTVMLLTVIWG), 212–232 (IMAISVIPFVIVQLPQMLGST), and 239–259 (VLIALILSVLMLISYCVYQVF). 2 consecutive EF-hand domains span residues 299 to 334 (PDEHVIRKLFLTIDANNDGHLSAAELKALIIGISFE) and 339 to 374 (DKDDAVGKVLQDFDKTLDEQVDQEEFVRGIKQWLIQ). Residues D312, N314, D316, H318, E323, D352, D356, Q358, and E363 each contribute to the Ca(2+) site. A run of 2 helical transmembrane segments spans residues 427-447 (WITIKAALLLLLGAAIAAAFA) and 457-477 (FSAATGIPSFFISFIALPLAT). N478 carries an N-linked (GlcNAc...) asparagine glycan. The next 3 helical transmembrane spans lie at 505-525 (CGGVTMNNILCLSVFLAIVYV), 532-552 (FSSEVLVILIVCLVMGGFASF), and 558-578 (LWTCFIAYLLYPFSLGLVYIL).

Belongs to the Ca(2+):cation antiporter (CaCA) (TC 2.A.19) family. In terms of tissue distribution, expressed in roots, leaves, stems, petals, stamens, ovules and siliques.

The protein resides in the cell membrane. It localises to the vacuole membrane. Its function is as follows. Possesses sodium/calcium exchanger (NCX) activity when expressed in a heterologous mammalian CHO-K1 cell system. Does not possess cation/proton exchanger (CAX) or sodium/proton (NHX) activity when expressed in a heterologous yeast cell system. Has the ability to bind calcium in vitro. Participates in the maintenance of calcium homeostasis. May play a role in auxin response, diurnal rhythm and flowering time. Involved in salt stress response. The chain is Sodium/calcium exchanger NCL from Arabidopsis thaliana (Mouse-ear cress).